The primary structure comprises 186 residues: NADH-quinone oxidoreductase subunit I (186 aa).

4Fe-4S ferredoxin-type domains follow at residues 70 to 100 (LTTRADGKVQCVSCNMCATVCPAYCIEIQSA) and 113 to 142 (DRFEIDYSRCIFCGFCVEACPEDAIRMSKD). [4Fe-4S] cluster contacts are provided by C80, C83, C86, C90, C122, C125, C128, and C132.

It belongs to the complex I 23 kDa subunit family. In terms of assembly, NDH-1 is composed of 14 different subunits. Subunits NuoA, H, J, K, L, M, N constitute the membrane sector of the complex. It depends on [4Fe-4S] cluster as a cofactor.

Its subcellular location is the cell inner membrane. The catalysed reaction is a quinone + NADH + 5 H(+)(in) = a quinol + NAD(+) + 4 H(+)(out). NDH-1 shuttles electrons from NADH, via FMN and iron-sulfur (Fe-S) centers, to quinones in the respiratory chain. The immediate electron acceptor for the enzyme in this species is believed to be ubiquinone. Couples the redox reaction to proton translocation (for every two electrons transferred, four hydrogen ions are translocated across the cytoplasmic membrane), and thus conserves the redox energy in a proton gradient. The chain is NADH-quinone oxidoreductase subunit I from Pelobacter propionicus (strain DSM 2379 / NBRC 103807 / OttBd1).